We begin with the raw amino-acid sequence, 265 residues long: Urease accessory protein UreH (265 aa).

This sequence belongs to the UreD family. In terms of assembly, ureH, UreF and UreG form a complex that acts as a GTP-hydrolysis-dependent molecular chaperone, activating the urease apoprotein by helping to assemble the nickel containing metallocenter of UreC. The UreE protein probably delivers the nickel.

It is found in the cytoplasm. In terms of biological role, required for maturation of urease via the functional incorporation of the urease nickel metallocenter. The sequence is that of Urease accessory protein UreH from Helicobacter pylori (strain G27).